The following is a 170-amino-acid chain: Probable calcium-binding protein CML29 (170 aa).

EF-hand domains lie at 27–62 (SYIS…LGLD), 63–98 (KPEH…GQLG), and 138–170 (ASVE…AQLL). Residues Asp-40, Asp-42, Asp-44, Glu-51, Asp-76, Asp-78, Asp-80, Lys-82, Glu-87, Asp-151, Asp-153, Asp-155, and Glu-162 each contribute to the Ca(2+) site.

Potential calcium sensor. The chain is Probable calcium-binding protein CML29 (CML29) from Oryza sativa subsp. japonica (Rice).